A 120-amino-acid polypeptide reads, in one-letter code: MEQLTKNQAVATSQEAVQNQNEPQLRDENAHNDKSVHGVLNPTYQAGLRRDAVQPDIEAERKKRDEIEAGKSYCSRRFGGATCDDKSAQIYARFDKNDWRIQPAEFYRFHDAEVNTFGYF.

Residues 1-23 (MEQLTKNQAVATSQEAVQNQNEP) are compositionally biased toward polar residues. A disordered region spans residues 1 to 64 (MEQLTKNQAV…PDIEAERKKR (64 aa)). Composition is skewed to basic and acidic residues over residues 24–36 (QLRD…DKSV) and 48–64 (LRRD…RKKR).

This sequence belongs to the microviridae B protein family. Component of the procapsid complex composed of 60 copies of the internally located B, 240 copies of the external scaffolding protein D, 60 copies of each of the viral structural proteins F and G proteins, and 12 copies of H. The proteolytic cleavage of the internal scaffolding protein B releases the scaffold protein in order to continue virion assembly.

Its subcellular location is the host cytoplasm. Its function is as follows. Participates in the assembly of the viral procapsid in the cytoplasm. Forms first a 12S pre-assembly complex with protein H, and F and G pentamers, then twelve 12S complexes are joined by the D protein to form the procapsid. Internal scaffold protein B is released from the procapsid upon genome packaging. Autoproteolytic activity cleaves protein B and probably facilitates its removal through the pores of the procapsid. The polypeptide is Internal scaffolding protein B (B) (Enterobacteria phage phiX174 (Isolate Sanger)).